The chain runs to 491 residues: Glutamyl-tRNA(Gln) amidotransferase subunit A (491 aa).

Active-site charge relay system residues include lysine 80 and serine 155. Serine 179 functions as the Acyl-ester intermediate in the catalytic mechanism.

The protein belongs to the amidase family. GatA subfamily. As to quaternary structure, heterotrimer of A, B and C subunits.

It carries out the reaction L-glutamyl-tRNA(Gln) + L-glutamine + ATP + H2O = L-glutaminyl-tRNA(Gln) + L-glutamate + ADP + phosphate + H(+). In terms of biological role, allows the formation of correctly charged Gln-tRNA(Gln) through the transamidation of misacylated Glu-tRNA(Gln) in organisms which lack glutaminyl-tRNA synthetase. The reaction takes place in the presence of glutamine and ATP through an activated gamma-phospho-Glu-tRNA(Gln). In Salinispora arenicola (strain CNS-205), this protein is Glutamyl-tRNA(Gln) amidotransferase subunit A.